Here is a 388-residue protein sequence, read N- to C-terminus: Chorismate synthase (388 aa).

NADP(+)-binding residues include R39 and R45. FMN is bound by residues 130-132 (RSS), 251-252 (NA), G296, 311-315 (KPIPT), and R337.

It belongs to the chorismate synthase family. In terms of assembly, homotetramer. It depends on FMNH2 as a cofactor.

The enzyme catalyses 5-O-(1-carboxyvinyl)-3-phosphoshikimate = chorismate + phosphate. Its pathway is metabolic intermediate biosynthesis; chorismate biosynthesis; chorismate from D-erythrose 4-phosphate and phosphoenolpyruvate: step 7/7. In terms of biological role, catalyzes the anti-1,4-elimination of the C-3 phosphate and the C-6 proR hydrogen from 5-enolpyruvylshikimate-3-phosphate (EPSP) to yield chorismate, which is the branch point compound that serves as the starting substrate for the three terminal pathways of aromatic amino acid biosynthesis. This reaction introduces a second double bond into the aromatic ring system. The protein is Chorismate synthase of Streptococcus pyogenes serotype M2 (strain MGAS10270).